The following is a 367-amino-acid chain: Alanine racemase (367 aa).

The active-site Proton acceptor; specific for D-alanine is Lys-35. Lys-35 is subject to N6-(pyridoxal phosphate)lysine. Residue Arg-130 coordinates substrate. Tyr-258 acts as the Proton acceptor; specific for L-alanine in catalysis. Met-306 provides a ligand contact to substrate.

The protein belongs to the alanine racemase family. The cofactor is pyridoxal 5'-phosphate.

It catalyses the reaction L-alanine = D-alanine. The protein operates within amino-acid biosynthesis; D-alanine biosynthesis; D-alanine from L-alanine: step 1/1. Catalyzes the interconversion of L-alanine and D-alanine. May also act on other amino acids. This is Alanine racemase (alr) from Acinetobacter baumannii (strain SDF).